The following is an 828-amino-acid chain: Periplasmic nitrate reductase (828 aa).

Positions 1–31 (MKLSRRHFMKANAVAAAAAVAGITIPIAVRA) form a signal peptide, tat-type signal. The 4Fe-4S Mo/W bis-MGD-type domain occupies 39–95 (IHWDKAPCRFCGVGCGVLVGTQNGRIVASQGDPEAPVNRGLNCIKGYFLPKIMYGQD). [4Fe-4S] cluster contacts are provided by cysteine 46, cysteine 49, cysteine 53, and cysteine 81. Mo-bis(molybdopterin guanine dinucleotide)-binding positions include lysine 83, glutamine 150, asparagine 175, cysteine 179, 212–219 (WGSNMAEM), 243–247 (STYQH), 262–264 (QTD), methionine 372, glutamine 376, asparagine 482, 508–509 (SD), lysine 531, aspartate 558, and 718–727 (TGRVLEHWHT). Phenylalanine 794 lines the substrate pocket. Asparagine 802 and lysine 819 together coordinate Mo-bis(molybdopterin guanine dinucleotide).

It belongs to the prokaryotic molybdopterin-containing oxidoreductase family. NasA/NapA/NarB subfamily. Component of the periplasmic nitrate reductase NapAB complex composed of NapA and NapB. Requires [4Fe-4S] cluster as cofactor. Mo-bis(molybdopterin guanine dinucleotide) serves as cofactor. In terms of processing, predicted to be exported by the Tat system. The position of the signal peptide cleavage has not been experimentally proven.

The protein resides in the periplasm. It catalyses the reaction 2 Fe(II)-[cytochrome] + nitrate + 2 H(+) = 2 Fe(III)-[cytochrome] + nitrite + H2O. Its function is as follows. Catalytic subunit of the periplasmic nitrate reductase complex NapAB. Receives electrons from NapB and catalyzes the reduction of nitrate to nitrite. This chain is Periplasmic nitrate reductase, found in Pectobacterium atrosepticum (strain SCRI 1043 / ATCC BAA-672) (Erwinia carotovora subsp. atroseptica).